The primary structure comprises 311 residues: Coproporphyrin III ferrochelatase 1 (311 aa).

Residues Y12, R29, R45–Y46, S53, and Y124 each bind Fe-coproporphyrin III. Positions 182 and 263 each coordinate Fe(2+).

It belongs to the ferrochelatase family.

Its subcellular location is the cytoplasm. It catalyses the reaction Fe-coproporphyrin III + 2 H(+) = coproporphyrin III + Fe(2+). The protein operates within porphyrin-containing compound metabolism; protoheme biosynthesis. Its function is as follows. Involved in coproporphyrin-dependent heme b biosynthesis. Catalyzes the insertion of ferrous iron into coproporphyrin III to form Fe-coproporphyrin III. This is Coproporphyrin III ferrochelatase 1 from Bacillus cereus (strain ATCC 14579 / DSM 31 / CCUG 7414 / JCM 2152 / NBRC 15305 / NCIMB 9373 / NCTC 2599 / NRRL B-3711).